Here is a 244-residue protein sequence, read N- to C-terminus: UPF0173 metal-dependent hydrolase Rcas_3617 (244 aa).

This sequence belongs to the UPF0173 family.

This is UPF0173 metal-dependent hydrolase Rcas_3617 from Roseiflexus castenholzii (strain DSM 13941 / HLO8).